The primary structure comprises 377 residues: N-acetyldiaminopimelate deacetylase (377 aa).

Asp69 is a catalytic residue. Glu128 functions as the Proton acceptor in the catalytic mechanism.

It belongs to the peptidase M20A family. N-acetyldiaminopimelate deacetylase subfamily.

The enzyme catalyses N-acetyl-(2S,6S)-2,6-diaminopimelate + H2O = (2S,6S)-2,6-diaminopimelate + acetate. The protein operates within amino-acid biosynthesis; L-lysine biosynthesis via DAP pathway; LL-2,6-diaminopimelate from (S)-tetrahydrodipicolinate (acetylase route): step 3/3. In terms of biological role, catalyzes the conversion of N-acetyl-diaminopimelate to diaminopimelate and acetate. This chain is N-acetyldiaminopimelate deacetylase, found in Streptococcus gordonii (strain Challis / ATCC 35105 / BCRC 15272 / CH1 / DL1 / V288).